A 206-amino-acid polypeptide reads, in one-letter code: ATP phosphoribosyltransferase (206 aa).

The protein belongs to the ATP phosphoribosyltransferase family. Short subfamily. Heteromultimer composed of HisG and HisZ subunits.

It localises to the cytoplasm. The enzyme catalyses 1-(5-phospho-beta-D-ribosyl)-ATP + diphosphate = 5-phospho-alpha-D-ribose 1-diphosphate + ATP. The protein operates within amino-acid biosynthesis; L-histidine biosynthesis; L-histidine from 5-phospho-alpha-D-ribose 1-diphosphate: step 1/9. Catalyzes the condensation of ATP and 5-phosphoribose 1-diphosphate to form N'-(5'-phosphoribosyl)-ATP (PR-ATP). Has a crucial role in the pathway because the rate of histidine biosynthesis seems to be controlled primarily by regulation of HisG enzymatic activity. In Brachyspira hyodysenteriae (strain ATCC 49526 / WA1), this protein is ATP phosphoribosyltransferase.